The primary structure comprises 714 residues: Polyribonucleotide nucleotidyltransferase (714 aa).

Residues Asp489 and Asp495 each coordinate Mg(2+). The KH domain maps to 556 to 615 (PKIDTIKIDVDKIKVVIGKGGETIDKIIAETGVKIDIDEEGNVSIYSSDQDAINRAKEII). The region spanning 625 to 693 (GEVYHAKVVR…DKGRIDASMK (69 aa)) is the S1 motif domain. The disordered stretch occupies residues 691 to 714 (SMKALVPRPPKPEKSEAKKEGKHD). Residues 700-714 (PKPEKSEAKKEGKHD) are compositionally biased toward basic and acidic residues.

Belongs to the polyribonucleotide nucleotidyltransferase family. Requires Mg(2+) as cofactor.

The protein resides in the cytoplasm. The catalysed reaction is RNA(n+1) + phosphate = RNA(n) + a ribonucleoside 5'-diphosphate. In terms of biological role, involved in mRNA degradation. Catalyzes the phosphorolysis of single-stranded polyribonucleotides processively in the 3'- to 5'-direction. This is Polyribonucleotide nucleotidyltransferase from Streptococcus equi subsp. zooepidemicus (strain MGCS10565).